The following is a 387-amino-acid chain: Trichocyst matrix protein T2-C (387 aa).

The signal sequence occupies residues 1–19 (MKTIILALALIVLASSTQA). Positions 20–48 (DVIATIKKIDQSPFGRTLFDTIWLELQTG) are excised as a propeptide. Positions 51 to 163 (LDRLLQTLTD…KVLEHQEATA (113 aa)) form a coiled coil. Residues 184 to 239 (KGKATKQPAHKFTKEVASMIQKHFTTSAKKAAKFQHRKGYSKLFKAFATIASKVEQ) constitute a propeptide that is removed on maturation. A coiled-coil region spans residues 294-333 (TALANAQSDLAALNDVIAQVEASLDTTNQRIENVSADRND).

Belongs to the TMP family. Post-translationally, two components are produced by post-translational processing from the precursor peptide.

The protein resides in the trichocyst. Its function is as follows. Structural protein that crystallize inside the trichocyst matrix. The chain is Trichocyst matrix protein T2-C (T2C) from Paramecium tetraurelia.